The chain runs to 369 residues: 4-hydroxy-3-methylbut-2-en-1-yl diphosphate synthase (flavodoxin) (369 aa).

4 residues coordinate [4Fe-4S] cluster: cysteine 268, cysteine 271, cysteine 303, and glutamate 310.

Belongs to the IspG family. The cofactor is [4Fe-4S] cluster.

The enzyme catalyses (2E)-4-hydroxy-3-methylbut-2-enyl diphosphate + oxidized [flavodoxin] + H2O + 2 H(+) = 2-C-methyl-D-erythritol 2,4-cyclic diphosphate + reduced [flavodoxin]. Its pathway is isoprenoid biosynthesis; isopentenyl diphosphate biosynthesis via DXP pathway; isopentenyl diphosphate from 1-deoxy-D-xylulose 5-phosphate: step 5/6. Converts 2C-methyl-D-erythritol 2,4-cyclodiphosphate (ME-2,4cPP) into 1-hydroxy-2-methyl-2-(E)-butenyl 4-diphosphate. In Exiguobacterium sibiricum (strain DSM 17290 / CCUG 55495 / CIP 109462 / JCM 13490 / 255-15), this protein is 4-hydroxy-3-methylbut-2-en-1-yl diphosphate synthase (flavodoxin).